Consider the following 605-residue polypeptide: Alanine--tRNA ligase (605 aa).

Zn(2+) is bound by residues H463, H467, C565, and H569.

This sequence belongs to the class-II aminoacyl-tRNA synthetase family. Zn(2+) is required as a cofactor.

The protein resides in the cytoplasm. The catalysed reaction is tRNA(Ala) + L-alanine + ATP = L-alanyl-tRNA(Ala) + AMP + diphosphate. Functionally, catalyzes the attachment of alanine to tRNA(Ala) in a two-step reaction: alanine is first activated by ATP to form Ala-AMP and then transferred to the acceptor end of tRNA(Ala). Also edits incorrectly charged Ser-tRNA(Ala) and Gly-tRNA(Ala) via its editing domain. This chain is Alanine--tRNA ligase (alaS), found in Treponema pallidum (strain Nichols).